Here is a 138-residue protein sequence, read N- to C-terminus: Putative pre-16S rRNA nuclease (138 aa).

Belongs to the YqgF nuclease family.

The protein localises to the cytoplasm. Functionally, could be a nuclease involved in processing of the 5'-end of pre-16S rRNA. This is Putative pre-16S rRNA nuclease from Flavobacterium johnsoniae (strain ATCC 17061 / DSM 2064 / JCM 8514 / BCRC 14874 / CCUG 350202 / NBRC 14942 / NCIMB 11054 / UW101) (Cytophaga johnsonae).